The sequence spans 154 residues: CS6 fimbrial subunit A (154 aa).

The N-terminal stretch at Met-1 to Ala-18 is a signal peptide.

The protein resides in the fimbrium. Functionally, fimbriae (also called pili), polar filaments radiating from the surface of the bacterium to a length of 0.5-1.5 micrometers and numbering 100-300 per cell, enable bacteria to colonize the epithelium of specific host organs. This Escherichia coli protein is CS6 fimbrial subunit A (cssA).